A 366-amino-acid chain; its full sequence is Chorismate synthase (366 aa).

Arg48 and Arg54 together coordinate NADP(+). FMN-binding positions include 125–127, 238–239, Gly278, 293–297, and Arg319; these read RSS, NA, and KPTSS.

The protein belongs to the chorismate synthase family. In terms of assembly, homotetramer. The cofactor is FMNH2.

The enzyme catalyses 5-O-(1-carboxyvinyl)-3-phosphoshikimate = chorismate + phosphate. Its pathway is metabolic intermediate biosynthesis; chorismate biosynthesis; chorismate from D-erythrose 4-phosphate and phosphoenolpyruvate: step 7/7. Catalyzes the anti-1,4-elimination of the C-3 phosphate and the C-6 proR hydrogen from 5-enolpyruvylshikimate-3-phosphate (EPSP) to yield chorismate, which is the branch point compound that serves as the starting substrate for the three terminal pathways of aromatic amino acid biosynthesis. This reaction introduces a second double bond into the aromatic ring system. This chain is Chorismate synthase, found in Methylococcus capsulatus (strain ATCC 33009 / NCIMB 11132 / Bath).